Here is a 692-residue protein sequence, read N- to C-terminus: Protein adenylyltransferase SelO-1, mitochondrial (692 aa).

The transit peptide at 1 to 24 directs the protein to the mitochondrion; that stretch reads MASVGSRLTRFYISRPGVIARRFL. The ATP site is built by glycine 142, glycine 144, lysine 176, aspartate 188, glycine 189, arginine 246, and arginine 253. The active-site Proton acceptor is aspartate 337. Mg(2+) is bound by residues asparagine 338 and aspartate 347. ATP is bound at residue aspartate 347. The tract at residues 637 to 676 is disordered; that stretch reads LEQPGWMGRGGAAIPGERDETEEEGSNSSGAGARGLVPYD. Selenocysteine 690 is a non-standard amino acid (selenocysteine).

This sequence belongs to the SELO family. The cofactor is Mg(2+).

The protein localises to the mitochondrion. It carries out the reaction L-tyrosyl-[protein] + ATP = O-(5'-adenylyl)-L-tyrosyl-[protein] + diphosphate. It catalyses the reaction L-threonyl-[protein] + ATP = 3-O-(5'-adenylyl)-L-threonyl-[protein] + diphosphate. The enzyme catalyses L-seryl-[protein] + ATP = 3-O-(5'-adenylyl)-L-seryl-[protein] + diphosphate. Catalyzes the transfer of adenosine 5'-monophosphate (AMP) to Ser, Thr and Tyr residues of target proteins (AMPylation). May be a redox-active mitochondrial selenoprotein which interacts with a redox target protein. In Danio rerio (Zebrafish), this protein is Protein adenylyltransferase SelO-1, mitochondrial.